A 185-amino-acid chain; its full sequence is MNQYNVKYLAKILCLKTEIARDPYAVINRNVLLRYTTDIEYNDLVTLITVRHKIDSMKTVFQVFNESSINYTPVDDDYGEPIIITSYLQKGHNKFPVNFLYIDVVISDLFPSFVRLDTTETNIVNSVLQTGDGKKTLRLPKMLETEIVVKILYRPNIPLKIVRFFRNNMVTGVEIADRSVISVAD.

The protein belongs to the poxviridae DNA-directed RNA polymerase 22 kDa subunit family. The DNA-dependent RNA polymerase used for intermediate and late genes expression consists of eight subunits Rpo30/OPG66, Rpo7/OPG90, Rpo22/OPG103, Rpo147/OPG105, Rpo18/OPG119, Rpo19/OPG131, Rpo132/OPG151 and Rpo35/OPG156. The same holoenzyme, with the addition of the transcription-specificity factor OPG109, is used for early gene expression.

The protein resides in the virion. It carries out the reaction RNA(n) + a ribonucleoside 5'-triphosphate = RNA(n+1) + diphosphate. Functionally, part of the DNA-dependent RNA polymerase which catalyzes the transcription of viral DNA into RNA using the four ribonucleoside triphosphates as substrates. Responsible for the transcription of early, intermediate and late genes. DNA-dependent RNA polymerase associates with the early transcription factor (ETF), itself composed of OPG118 and OPG133, thereby allowing the early genes transcription. Late transcription, and probably also intermediate transcription, require newly synthesized RNA polymerase. In Cynomys gunnisoni (Gunnison's prairie dog), this protein is DNA-directed RNA polymerase 22 kDa subunit (OPG103).